The primary structure comprises 349 residues: UDP-glucose 4-epimerase (349 aa).

NAD(+)-binding positions include 10–12 (GFI), 31–35 (DNFAN), 66–67 (DV), and K92. 132-134 (SAT) contacts substrate. The Proton acceptor role is filled by Y158. Positions 162 and 186 each coordinate NAD(+). Residues 186–188 (YFN), 207–209 (NNL), 225–227 (TIY), R240, and 303–306 (RPGD) contribute to the substrate site.

It belongs to the NAD(P)-dependent epimerase/dehydratase family. The cofactor is NAD(+). As to expression, expressed in gonads, vulva, intestine, hypdermis and nervous system.

It catalyses the reaction UDP-alpha-D-glucose = UDP-alpha-D-galactose. The enzyme catalyses UDP-N-acetyl-alpha-D-glucosamine = UDP-N-acetyl-alpha-D-galactosamine. Its pathway is carbohydrate metabolism; galactose metabolism. Its function is as follows. Catalyzes two distinct but analogous reactions: the reversible epimerization of UDP-glucose to UDP-galactose and the reversible epimerization of UDP-N-acetylglucosamine to UDP-N-acetylgalactosamine. The reaction with UDP-Gal plays a critical role in the Leloir pathway of galactose catabolism in which galactose is converted to the glycolytic intermediate glucose 6-phosphate. It contributes to the catabolism of dietary galactose and enables the endogenous biosynthesis of both UDP-Gal and UDP-GalNAc when exogenous sources are limited. Both UDP-sugar interconversions are important for the synthesis of glycoproteins and glycolipids. In Caenorhabditis elegans, this protein is UDP-glucose 4-epimerase.